A 209-amino-acid polypeptide reads, in one-letter code: Protein GrpE (209 aa).

Residues 1–63 (MKKSRKKENM…NPEEACREEN (63 aa)) form a disordered region. Basic and acidic residues-rich tracts occupy residues 7–42 (KENM…KVSP) and 50–63 (EAEK…REEN).

It belongs to the GrpE family. In terms of assembly, homodimer.

The protein resides in the cytoplasm. Its function is as follows. Participates actively in the response to hyperosmotic and heat shock by preventing the aggregation of stress-denatured proteins, in association with DnaK and GrpE. It is the nucleotide exchange factor for DnaK and may function as a thermosensor. Unfolded proteins bind initially to DnaJ; upon interaction with the DnaJ-bound protein, DnaK hydrolyzes its bound ATP, resulting in the formation of a stable complex. GrpE releases ADP from DnaK; ATP binding to DnaK triggers the release of the substrate protein, thus completing the reaction cycle. Several rounds of ATP-dependent interactions between DnaJ, DnaK and GrpE are required for fully efficient folding. This is Protein GrpE from Methanosarcina mazei (strain ATCC BAA-159 / DSM 3647 / Goe1 / Go1 / JCM 11833 / OCM 88) (Methanosarcina frisia).